Reading from the N-terminus, the 437-residue chain is Amino-acid acetyltransferase (437 aa).

The 141-residue stretch at 289–429 folds into the N-acetyltransferase domain; the sequence is ENIRLATSFD…EHYNYQRMSK (141 aa).

The protein belongs to the acetyltransferase family. ArgA subfamily.

The protein resides in the cytoplasm. The enzyme catalyses L-glutamate + acetyl-CoA = N-acetyl-L-glutamate + CoA + H(+). It participates in amino-acid biosynthesis; L-arginine biosynthesis; N(2)-acetyl-L-ornithine from L-glutamate: step 1/4. The protein is Amino-acid acetyltransferase of Actinobacillus pleuropneumoniae serotype 3 (strain JL03).